We begin with the raw amino-acid sequence, 51 residues long: Large ribosomal subunit protein eL39 (51 aa).

The segment covering 1–19 (MSHNMKGQKKRLAKAHKQN) has biased composition (basic residues). The segment at 1–23 (MSHNMKGQKKRLAKAHKQNSRVP) is disordered.

It belongs to the eukaryotic ribosomal protein eL39 family.

The sequence is that of Large ribosomal subunit protein eL39 from Methanosarcina mazei (strain ATCC BAA-159 / DSM 3647 / Goe1 / Go1 / JCM 11833 / OCM 88) (Methanosarcina frisia).